The following is a 274-amino-acid chain: ATP synthase subunit b 2 (274 aa).

Residues 2-22 (HIDWFVLLAQLVNFLILIYLL) traverse the membrane as a helical segment.

It belongs to the ATPase B chain family. F-type ATPases have 2 components, F(1) - the catalytic core - and F(0) - the membrane proton channel. F(1) has five subunits: alpha(3), beta(3), gamma(1), delta(1), epsilon(1). F(0) has three main subunits: a(1), b(2) and c(10-14). The alpha and beta chains form an alternating ring which encloses part of the gamma chain. F(1) is attached to F(0) by a central stalk formed by the gamma and epsilon chains, while a peripheral stalk is formed by the delta and b chains.

It localises to the cell inner membrane. Functionally, f(1)F(0) ATP synthase produces ATP from ADP in the presence of a proton or sodium gradient. F-type ATPases consist of two structural domains, F(1) containing the extramembraneous catalytic core and F(0) containing the membrane proton channel, linked together by a central stalk and a peripheral stalk. During catalysis, ATP synthesis in the catalytic domain of F(1) is coupled via a rotary mechanism of the central stalk subunits to proton translocation. Component of the F(0) channel, it forms part of the peripheral stalk, linking F(1) to F(0). The polypeptide is ATP synthase subunit b 2 (Syntrophus aciditrophicus (strain SB)).